A 40-amino-acid polypeptide reads, in one-letter code: Dolichyl-diphosphooligosaccharide--protein glycosyltransferase subunit 4 (40 aa).

Over 1–4 (MITD) the chain is Lumenal. A helical membrane pass occupies residues 5-25 (VQLAIFSNVLGVFLFLLVVAY). At 26–40 (HYINANTGKIGPKAK) the chain is on the cytoplasmic side.

This sequence belongs to the OST4 family. In terms of assembly, component of the oligosaccharyltransferase (OST) complex.

The protein localises to the endoplasmic reticulum membrane. Its function is as follows. Subunit of the oligosaccharyl transferase (OST) complex that catalyzes the initial transfer of a defined glycan (Glc(3)Man(9)GlcNAc(2) in eukaryotes) from the lipid carrier dolichol-pyrophosphate to an asparagine residue within an Asn-X-Ser/Thr consensus motif in nascent polypeptide chains, the first step in protein N-glycosylation. N-glycosylation occurs cotranslationally and the complex associates with the Sec61 complex at the channel-forming translocon complex that mediates protein translocation across the endoplasmic reticulum (ER). All subunits are required for a maximal enzyme activity. The polypeptide is Dolichyl-diphosphooligosaccharide--protein glycosyltransferase subunit 4 (Drosophila willistoni (Fruit fly)).